The primary structure comprises 458 residues: uncharacterized protein (458 aa).

The protein belongs to the glycerate kinase type-2 family.

This is an uncharacterized protein from Caenorhabditis elegans.